Reading from the N-terminus, the 70-residue chain is MPKQIHEIKDFLLTARRKDAKSVKIKKNKDNVKFKVRCSRYLYTLVITDKEKADKLKQSLPPGLAVKELK.

Belongs to the eukaryotic ribosomal protein eL38 family.

The protein is Large ribosomal subunit protein eL38 (RPL38) of Branchiostoma belcheri (Amphioxus).